The following is a 323-amino-acid chain: Serine/threonine-protein phosphatase PP1-gamma catalytic subunit B (323 aa).

Asp-64, His-66, Asp-92, and Asn-124 together coordinate Mn(2+). His-125 serves as the catalytic Proton donor. Residues His-173 and His-248 each contribute to the Mn(2+) site. Residues 301–323 (KKKPNASRPVTPPRGIITKQAKK) form a disordered region.

The protein belongs to the PPP phosphatase family. PP-1 subfamily. As to quaternary structure, PP1 comprises a catalytic subunit, ppp1c1, ppp1cb or ppp1cc, which is folded into its native form by inhibitor 2 and glycogen synthetase kinase 3, and then is complexed to one or several targeting or regulatory subunits. Mn(2+) is required as a cofactor.

The protein resides in the cytoplasm. Its subcellular location is the nucleus. It localises to the cleavage furrow. The protein localises to the nucleolus. It is found in the nucleoplasm. The protein resides in the chromosome. Its subcellular location is the centromere. It localises to the kinetochore. The protein localises to the nucleus speckle. It is found in the midbody. The protein resides in the mitochondrion. The catalysed reaction is O-phospho-L-seryl-[protein] + H2O = L-seryl-[protein] + phosphate. It carries out the reaction O-phospho-L-threonyl-[protein] + H2O = L-threonyl-[protein] + phosphate. Its function is as follows. Protein phosphatase that associates with over 200 regulatory proteins to form highly specific holoenzymes which dephosphorylate hundreds of biological targets. Protein phosphatase 1 (PP1) is essential for cell division, and participates in the regulation of glycogen metabolism, muscle contractility and protein synthesis. Promotes nuclear envelope reassembly by targeting nuclear membrane vesicles to chromatin at the end of mitosis. Acts by dephosphorylating membrane proteins such as lamin B receptor (lbr) to regulate the binding of membrane proteins to chromatin. The polypeptide is Serine/threonine-protein phosphatase PP1-gamma catalytic subunit B (ppp1cc-b) (Xenopus laevis (African clawed frog)).